The chain runs to 103 residues: UPF0145 protein PTH_2690 (103 aa).

It belongs to the UPF0145 family.

This chain is UPF0145 protein PTH_2690, found in Pelotomaculum thermopropionicum (strain DSM 13744 / JCM 10971 / SI).